The following is a 342-amino-acid chain: Alpha-(1,3)-fucosyltransferase 7 (342 aa).

Over 1 to 11 the chain is Cytoplasmic; it reads MQNAGLSPTPS. The helical; Signal-anchor for type II membrane protein transmembrane segment at 12–31 threads the bilayer; that stretch reads LRALGGLAMAALLSTVWLWW. The Extracellular segment spans residues 32 to 342; sequence RLGAAPGGAP…YQDLEGWFQA (311 aa). C68 and C76 are joined by a disulfide. N81 carries N-linked (GlcNAc...) asparagine glycosylation. An intrachain disulfide couples C211 to C214. N-linked (GlcNAc...) asparagine glycosylation is present at N291. A disulfide bridge connects residues C318 and C321.

Belongs to the glycosyltransferase 10 family. Post-translationally, N-glycosylated. Expressed in thymus, spleen, liver and lung. Highly expressed in the thymus and lower expressed in the lung.

The protein resides in the membrane. It catalyses the reaction an N-acetyl-alpha-neuraminyl-(2-&gt;3)-beta-D-galactosyl-(1-&gt;4)-N-acetyl-beta-D-glucosaminyl derivative + GDP-beta-L-fucose = an alpha-Neu5Ac-(2-&gt;3)-beta-D-Gal-(1-&gt;4)-[alpha-L-Fuc-(1-&gt;3)]-beta-D-GlcNAc derivative + GDP + H(+). It carries out the reaction a neolactoside IV(3)-alpha-NeuAc-nLc4Cer + GDP-beta-L-fucose = a neolactoside IV(3)-alpha-NeuNAc,III(3)-alpha-Fuc-nLc4Cer + GDP + H(+). The catalysed reaction is a neolactoside VI(3)-alpha-NeuNAc-nLc6Cer + GDP-beta-L-fucose = a neolactoside VI(3)-alpha-NeuAc,V(3)-alphaFuc-nLc6Cer + GDP + H(+). The enzyme catalyses an alpha-Neu5Ac-(2-&gt;3)-beta-D-Gal-(1-&gt;4)-beta-D-GlcNAc-(1-&gt;3)-beta-D-Gal-(1-&gt;4)-[alpha-L-Fuc-(1-&gt;3)]-beta-D-GlcNAc derivative + GDP-beta-L-fucose = an alpha-Neu5Ac-(2-&gt;3)-beta-D-Gal-(1-&gt;4)-[alpha-L-Fuc-(1-&gt;3)]-beta-D-GlcNAc-(1-&gt;3)-beta-D-Gal-(1-&gt;4)-[alpha-L-Fuc-(1-&gt;3)]-beta-D-GlcNAc derivative + GDP + H(+). It catalyses the reaction an alpha-Neu5Ac-(2-&gt;3)-beta-D-Gal-(1-&gt;4)-beta-D-GlcNAc6S derivative + GDP-beta-L-fucose = an alpha-Neu5Ac-(2-&gt;3)-beta-D-Gal-(1-&gt;4)-[alpha-L-Fuc-(1-&gt;3)]-beta-D-GlcNAc6S derivative + GDP + H(+). It carries out the reaction alpha-Neu5Ac-(2-&gt;3)-beta-D-Gal-(1-&gt;4)-beta-D-GlcNAc-(1-&gt;3)-beta-D-Gal-(1-&gt;4)-D-Glc + GDP-beta-L-fucose = alpha-Neu5Ac-(2-&gt;3)-beta-D-Gal-(1-&gt;4)-[alpha-L-Fuc-(1-&gt;3)]-beta-D-GlcNAc-(1-&gt;3)-beta-D-Gal-(1-&gt;4)-D-Glc + GDP + H(+). The catalysed reaction is alpha-Neu5Ac-(2-&gt;3)-beta-D-Gal-(1-&gt;4)-beta-D-GlcNAc-(1-&gt;3)-beta-D-Gal-(1-&gt;4)-[alpha-L-Fuc-(1-&gt;3)]-beta-D-GlcNAc-(1-&gt;3)-beta-D-Gal-(1-&gt;4)-beta-D-GlcNAc + GDP-beta-L-fucose = alpha-Neu5Ac-(2-&gt;3)-beta-D-Gal-(1-&gt;4)-[alpha-L-Fuc-(1-&gt;3)]-beta-D-GlcNAc-(1-&gt;3)-beta-D-Gal-(1-&gt;4)-[alpha-L-Fuc-(1-&gt;3)]-beta-D-GlcNAc-(1-&gt;3)-beta-D-Gal-(1-&gt;4)-beta-D-GlcNAc + GDP + H(+). The enzyme catalyses alpha-Neu5Ac-(2-&gt;3)-beta-D-Gal-(1-&gt;4)-beta-D-GlcNAc-(1-&gt;3)-beta-D-Gal-(1-&gt;4)-beta-D-GlcNAc-(1-&gt;3)-beta-D-Gal-(1-&gt;4)-beta-D-GlcNAc + GDP-beta-L-fucose = alpha-Neu5Ac-(2-&gt;3)-beta-D-Gal-(1-&gt;4)-[alpha-L-Fuc-(1-&gt;3)]-beta-D-GlcNAc-(1-&gt;3)-beta-D-Gal-(1-&gt;4)-beta-D-GlcNAc-(1-&gt;3)-beta-D-Gal-(1-&gt;4)-beta-D-GlcNAc + GDP + H(+). The protein operates within protein modification; protein glycosylation. Inhibited by NaCl. Inhibited by GDP in a concentration dependent manner, with an IC(50) value of 93 uM. Also inhibited by GMP and GTP. Inhibited by N-ethylmaleimide. Activated by poly(ethylene glycol) by enhancing the thermal stability of FUT7. Activated by Mn2+, Ca2+, and Mg2+. Both panosialin A and B inhibit activity with IC(50) values of 4.8 and 5.3 ug/ml, respectively. Inhibited by gallic acid (GA) and (-)-epigallocatechin gallate (EGCG) in a time-dependent and irreversible manner with IC(50) values of 60 and 700 nM, respectively. Its function is as follows. Catalyzes the transfer of L-fucose, from a guanosine diphosphate-beta-L-fucose, to the N-acetyl glucosamine (GlcNAc) of a distal alpha2,3 sialylated lactosamine unit of a glycoprotein or a glycolipid-linked sialopolylactosamines chain through an alpha-1,3 glycosidic linkage and participates in the final fucosylation step in the biosynthesis of the sialyl Lewis X (sLe(x)), a carbohydrate involved in cell and matrix adhesion during leukocyte trafficking and fertilization. In vitro, also synthesizes sialyl-dimeric-Lex structures, from VIM-2 structures and both di-fucosylated and trifucosylated structures from mono-fucosylated precursors. However does not catalyze alpha 1-3 fucosylation when an internal alpha 1-3 fucosylation is present in polylactosamine chain and the fucosylation rate of the internal GlcNAc residues is reduced once fucose has been added to the distal GlcNAc. Also catalyzes the transfer of a fucose from GDP-beta-fucose to the 6-sulfated a(2,3)sialylated substrate to produce 6-sulfo sLex mediating significant L-selectin-dependent cell adhesion. Through sialyl-Lewis(x) biosynthesis, can control SELE- and SELP-mediated cell adhesion with leukocytes and allows leukocytes tethering and rolling along the endothelial tissue thereby enabling the leukocytes to accumulate at a site of inflammation. May enhance embryo implantation through sialyl Lewis X (sLeX)-mediated adhesion of embryo cells to endometrium. May affect insulin signaling by up-regulating the phosphorylation and expression of some signaling molecules involved in the insulin-signaling pathway through SLe(x) which is present on the glycans of the INSRR alpha subunit. This chain is Alpha-(1,3)-fucosyltransferase 7, found in Bos taurus (Bovine).